Reading from the N-terminus, the 1295-residue chain is Serine protease sat autotransporter (1295 aa).

A signal peptide spans 1 to 49; sequence MNKIYSLKYSAATGGLIAVSELAKRVSGKTNRKLVATMLSLAVAGTVNA. A Peptidase S6 domain is found at 51–300; it reads NIDISNVWAR…TKYNDKLVSE (250 aa). Residues His121, Asp149, and Ser256 each act as charge relay system in the active site. The Autotransporter domain maps to 1029–1295; it reads DINGESGAWA…AINANFRYSF (267 aa).

In terms of processing, cleaved to release the mature protein from the outer membrane.

It localises to the periplasm. The protein resides in the secreted. The protein localises to the cell surface. It is found in the cell outer membrane. Inhibited by phenylmethylsulfonyl fluoride and Pefabloc. Functionally, shows serine protease activity and displays cytophatic activity, including elongation, rounding, and detachment of a proportion of the cells from monolayer in culture. Triggers vacuolation within the cytoplasm of the human bladder and kidney cells. The sequence is that of Serine protease sat autotransporter (sat) from Escherichia coli O6:H1 (strain CFT073 / ATCC 700928 / UPEC).